The primary structure comprises 342 residues: Ferredoxin--NADP reductase (342 aa).

Residues cysteine 17, aspartate 36, glutamine 44, tyrosine 49, isoleucine 89, phenylalanine 124, aspartate 289, and threonine 330 each coordinate FAD.

This sequence belongs to the ferredoxin--NADP reductase type 2 family. As to quaternary structure, homodimer. The cofactor is FAD.

The catalysed reaction is 2 reduced [2Fe-2S]-[ferredoxin] + NADP(+) + H(+) = 2 oxidized [2Fe-2S]-[ferredoxin] + NADPH. The polypeptide is Ferredoxin--NADP reductase (Rhodopseudomonas palustris (strain BisA53)).